Reading from the N-terminus, the 1034-residue chain is MEHERGGGGRGRGRGRGGGRGGGGGDGRGGGYGGAGGGGVGGRGGRGPPGGGGGRGYEPGGGRGYGGGGGGGGRGYGGGGGGGGYESGGGRGYGGGGRGYESGGGRGPGGGGRGHESGGGGGRGGNVWAQPGRGRGGAPAPAPAPAPAARRIQDEGAARSSGTVERIASTEVVRVQPPAPPVAVSRSGTRVPMRRPDGGGSVSKAKVKLLVNHFIVKYRQASTVFHYDIDIKLDISSPKASDKELSKGDFLTVKDELFKDESFRRLSSAVAYDGKRNLFTCAELPDGLFRVKVRSRTYIVSVEFKKKLPLSQLSELPVPREVLQGLDVIVREASSWRKIIIGQGFYSQGRSVPIGPDVVALKGTQQTLKCTQKGLILCVDYSVMPFRKAGPVLDLVQKSVRYLDYRTTLNKHQLDTLKNELKGQRVTVNHRRTKQKYIVKGLTDKPASQITFVDSESGQTKKLLDYYSQQYGKVIEYQMLPCLDLSKSKDKQNYVPIELCDLLEGQRYPKASLNRNSDKTLKEMALIPASSRKEEILELVNADDGPCRGEIAQQFGISLDVQMMEVTGRTLPPPSLKLGTSSGQPPKFNIDQPNCQWNLTRKRLAEGGVLQCWGVVDFSADSGQYALNGNMFIDKIVRKCCDLGVQMNRNPCIVQLLDMEVLSDPHQLFEELNKAKQAAASKKQKLQLLFCPMSDQHPGYKTLKLICETQLGIQTQCFLSFLANKQQGQDQYMSNLALKINGKIGGSNIQLFGESLPRISGAPYMFIGADVNHPSPGNVESPSIAAVVASVDQGASKYVPRIRAQPHRCEVIQHLGDMCKELIGVFEKRNRVKPQRIIYFRDGVSDGQFDMVLNEELADMEKAIKTKDYSPTITVIVAKKRHHTRLFPKDLNQQQTKNGNVLPGTVVDTGVVDPAAYDFYLCSHNGLIGTSRPTHYYSLLDEHGFASDDLQKLVYNLCFVFARCTKPVSLATPVYYADLAAYRGRLYYEGMMMSQPPPSSAASASSASSSGAGASDFRSFPALHEDLVDNMFFI.

Positions 1-201 are disordered; sequence MEHERGGGGR…PMRRPDGGGS (201 aa). A compositionally biased stretch (gly residues) spans 18–125; that stretch reads GGRGGGGGDG…ESGGGGGRGG (108 aa). Positions 172–187 are enriched in low complexity; that stretch reads VVRVQPPAPPVAVSRS. Positions 391-504 constitute a PAZ domain; that stretch reads PVLDLVQKSV…VPIELCDLLE (114 aa). A Piwi domain is found at 688–989; sequence LLFCPMSDQH…AAYRGRLYYE (302 aa).

This sequence belongs to the argonaute family. Ago subfamily.

Probably involved in the RNA silencing pathway. May bind to short RNAs such as microRNAs (miRNAs) or short interfering RNAs (siRNAs), and represses the translation of mRNAs which are complementary to them. The sequence is that of Protein argonaute 2 (AGO2) from Oryza sativa subsp. japonica (Rice).